The primary structure comprises 331 residues: Ketol-acid reductoisomerase (NADP(+)) (331 aa).

One can recognise a KARI N-terminal Rossmann domain in the interval 2 to 182 (AQLFYDSDAD…GGTRAGILET (181 aa)). Residues 25–28 (YGSQ), serine 51, serine 53, and 83–86 (DEFQ) each bind NADP(+). The active site involves histidine 108. Glycine 134 is a binding site for NADP(+). Residues 183-328 (NFKEETETDL…KGLRSMFSWL (146 aa)) enclose the KARI C-terminal knotted domain. 4 residues coordinate Mg(2+): aspartate 191, glutamate 195, glutamate 227, and glutamate 231. Position 252 (serine 252) interacts with substrate.

This sequence belongs to the ketol-acid reductoisomerase family. Requires Mg(2+) as cofactor.

It carries out the reaction (2R)-2,3-dihydroxy-3-methylbutanoate + NADP(+) = (2S)-2-acetolactate + NADPH + H(+). The enzyme catalyses (2R,3R)-2,3-dihydroxy-3-methylpentanoate + NADP(+) = (S)-2-ethyl-2-hydroxy-3-oxobutanoate + NADPH + H(+). The protein operates within amino-acid biosynthesis; L-isoleucine biosynthesis; L-isoleucine from 2-oxobutanoate: step 2/4. It participates in amino-acid biosynthesis; L-valine biosynthesis; L-valine from pyruvate: step 2/4. Functionally, involved in the biosynthesis of branched-chain amino acids (BCAA). Catalyzes an alkyl-migration followed by a ketol-acid reduction of (S)-2-acetolactate (S2AL) to yield (R)-2,3-dihydroxy-isovalerate. In the isomerase reaction, S2AL is rearranged via a Mg-dependent methyl migration to produce 3-hydroxy-3-methyl-2-ketobutyrate (HMKB). In the reductase reaction, this 2-ketoacid undergoes a metal-dependent reduction by NADPH to yield (R)-2,3-dihydroxy-isovalerate. In Synechococcus sp. (strain CC9605), this protein is Ketol-acid reductoisomerase (NADP(+)).